The chain runs to 340 residues: Ketol-acid reductoisomerase (NADP(+)) (340 aa).

In terms of domain architecture, KARI N-terminal Rossmann spans 3–183 (LSVYYDKDCN…GGGRTGIIET (181 aa)). NADP(+) is bound by residues 26-29 (FGSQ), Ser54, and 84-87 (DELQ). His109 is an active-site residue. Gly135 provides a ligand contact to NADP(+). In terms of domain architecture, KARI C-terminal knotted spans 184–329 (TFKDETETDL…ERLRAMMPWI (146 aa)). Residues Asp192, Glu196, Glu228, and Glu232 each contribute to the Mg(2+) site. Residue Ser253 coordinates substrate.

This sequence belongs to the ketol-acid reductoisomerase family. Mg(2+) is required as a cofactor.

The enzyme catalyses (2R)-2,3-dihydroxy-3-methylbutanoate + NADP(+) = (2S)-2-acetolactate + NADPH + H(+). It carries out the reaction (2R,3R)-2,3-dihydroxy-3-methylpentanoate + NADP(+) = (S)-2-ethyl-2-hydroxy-3-oxobutanoate + NADPH + H(+). It functions in the pathway amino-acid biosynthesis; L-isoleucine biosynthesis; L-isoleucine from 2-oxobutanoate: step 2/4. It participates in amino-acid biosynthesis; L-valine biosynthesis; L-valine from pyruvate: step 2/4. Involved in the biosynthesis of branched-chain amino acids (BCAA). Catalyzes an alkyl-migration followed by a ketol-acid reduction of (S)-2-acetolactate (S2AL) to yield (R)-2,3-dihydroxy-isovalerate. In the isomerase reaction, S2AL is rearranged via a Mg-dependent methyl migration to produce 3-hydroxy-3-methyl-2-ketobutyrate (HMKB). In the reductase reaction, this 2-ketoacid undergoes a metal-dependent reduction by NADPH to yield (R)-2,3-dihydroxy-isovalerate. The protein is Ketol-acid reductoisomerase (NADP(+)) of Wolinella succinogenes (strain ATCC 29543 / DSM 1740 / CCUG 13145 / JCM 31913 / LMG 7466 / NCTC 11488 / FDC 602W) (Vibrio succinogenes).